The chain runs to 122 residues: Large ribosomal subunit protein uL18 (122 aa).

This sequence belongs to the universal ribosomal protein uL18 family. As to quaternary structure, part of the 50S ribosomal subunit; part of the 5S rRNA/L5/L18/L25 subcomplex. Contacts the 5S and 23S rRNAs.

In terms of biological role, this is one of the proteins that bind and probably mediate the attachment of the 5S RNA into the large ribosomal subunit, where it forms part of the central protuberance. The sequence is that of Large ribosomal subunit protein uL18 from Leptospira borgpetersenii serovar Hardjo-bovis (strain JB197).